Here is a 58-residue protein sequence, read N- to C-terminus: AKDGDVKGPAGCMKYKSGDCRGKTCCDQQYLWYKWRNLACRCFTVEVFKKDCWCNDIS.

4 disulfides stabilise this stretch: C12-C26, C20-C40, C25-C54, and C42-C52.

This sequence belongs to the neurotoxin 26 (DTX) family. In terms of tissue distribution, expressed by the venom gland.

Its subcellular location is the secreted. Its function is as follows. Acts by delaying the inactivation of presynaptic voltage-sensitive sodium channels (Nav). Acts against insects and cause a progressive spastic paralysis. This Diguetia canities (Desert bush spider) protein is Mu-diguetoxin-Dc1b.